Here is an 815-residue protein sequence, read N- to C-terminus: Leucine--tRNA ligase (815 aa).

The short motif at 42–52 (PYPSGRLHMGH) is the 'HIGH' region element. A 'KMSKS' region motif is present at residues 574–578 (KMSKS). K577 serves as a coordination point for ATP.

It belongs to the class-I aminoacyl-tRNA synthetase family.

It localises to the cytoplasm. The enzyme catalyses tRNA(Leu) + L-leucine + ATP = L-leucyl-tRNA(Leu) + AMP + diphosphate. The chain is Leucine--tRNA ligase from Marinomonas sp. (strain MWYL1).